Reading from the N-terminus, the 221-residue chain is Probable lipoprotein CT_734 (221 aa).

The signal sequence occupies residues 1–24; it reads MKKFIYKYSFGALLLLSGLSGLSS. Residue Cys25 is the site of N-palmitoyl cysteine attachment. Residue Cys25 is the site of S-diacylglycerol cysteine attachment.

The protein belongs to the chlamydial CPn_0875/CT_734/TC_0107 family.

It is found in the cell membrane. The chain is Probable lipoprotein CT_734 from Chlamydia trachomatis serovar D (strain ATCC VR-885 / DSM 19411 / UW-3/Cx).